The primary structure comprises 230 residues: uncharacterized protein (230 aa).

A divalent metal cation is bound by residues E74, E76, and D105.

It belongs to the FAH family.

This is an uncharacterized protein from Pyrococcus horikoshii (strain ATCC 700860 / DSM 12428 / JCM 9974 / NBRC 100139 / OT-3).